Consider the following 86-residue polypeptide: Large ribosomal subunit protein uL23 (86 aa).

This sequence belongs to the universal ribosomal protein uL23 family. In terms of assembly, part of the 50S ribosomal subunit. Contacts protein L29.

Functionally, binds to 23S rRNA. One of the proteins that surrounds the polypeptide exit tunnel on the outside of the ribosome. The polypeptide is Large ribosomal subunit protein uL23 (Methanocaldococcus jannaschii (strain ATCC 43067 / DSM 2661 / JAL-1 / JCM 10045 / NBRC 100440) (Methanococcus jannaschii)).